A 128-amino-acid polypeptide reads, in one-letter code: Type-4 ice-structuring protein LS-12 (128 aa).

The first 20 residues, 1–20, serve as a signal peptide directing secretion; that stretch reads MKFSLVATIVLLALAQGSFA. Position 21 is a pyrrolidone carboxylic acid (Gln-21).

This sequence belongs to the apolipoprotein A1/A4/E family.

The protein localises to the secreted. Its function is as follows. Antifreeze proteins lower the blood freezing point. The polypeptide is Type-4 ice-structuring protein LS-12 (Myoxocephalus octodecemspinosus (Longhorn sculpin)).